Here is a 133-residue protein sequence, read N- to C-terminus: uncharacterized protein (133 aa).

This is an uncharacterized protein from Aquifex aeolicus (strain VF5).